The sequence spans 195 residues: Protein GrpE (195 aa).

It belongs to the GrpE family. As to quaternary structure, homodimer.

It localises to the cytoplasm. Functionally, participates actively in the response to hyperosmotic and heat shock by preventing the aggregation of stress-denatured proteins, in association with DnaK and GrpE. It is the nucleotide exchange factor for DnaK and may function as a thermosensor. Unfolded proteins bind initially to DnaJ; upon interaction with the DnaJ-bound protein, DnaK hydrolyzes its bound ATP, resulting in the formation of a stable complex. GrpE releases ADP from DnaK; ATP binding to DnaK triggers the release of the substrate protein, thus completing the reaction cycle. Several rounds of ATP-dependent interactions between DnaJ, DnaK and GrpE are required for fully efficient folding. In Francisella tularensis subsp. mediasiatica (strain FSC147), this protein is Protein GrpE.